The following is a 219-amino-acid chain: Protein-L-isoaspartate O-methyltransferase (219 aa).

The active site involves Ser-60.

The protein belongs to the methyltransferase superfamily. L-isoaspartyl/D-aspartyl protein methyltransferase family.

It localises to the cytoplasm. It carries out the reaction [protein]-L-isoaspartate + S-adenosyl-L-methionine = [protein]-L-isoaspartate alpha-methyl ester + S-adenosyl-L-homocysteine. In terms of biological role, catalyzes the methyl esterification of L-isoaspartyl residues in peptides and proteins that result from spontaneous decomposition of normal L-aspartyl and L-asparaginyl residues. It plays a role in the repair and/or degradation of damaged proteins. This Rhodospirillum rubrum (strain ATCC 11170 / ATH 1.1.1 / DSM 467 / LMG 4362 / NCIMB 8255 / S1) protein is Protein-L-isoaspartate O-methyltransferase.